A 753-amino-acid polypeptide reads, in one-letter code: 5-methyltetrahydropteroyltriglutamate--homocysteine methyltransferase (753 aa).

5-methyltetrahydropteroyltri-L-glutamate is bound by residues 17 to 20 (RELK) and lysine 117. L-homocysteine-binding positions include 431 to 433 (IGS) and glutamate 484. Residues 431–433 (IGS) and glutamate 484 each bind L-methionine. 5-methyltetrahydropteroyltri-L-glutamate-binding positions include 515–516 (RC) and tryptophan 561. Aspartate 599 provides a ligand contact to L-homocysteine. Aspartate 599 contacts L-methionine. 5-methyltetrahydropteroyltri-L-glutamate is bound at residue glutamate 605. Residues histidine 641, cysteine 643, and glutamate 665 each coordinate Zn(2+). The Proton donor role is filled by histidine 694. Residue cysteine 726 participates in Zn(2+) binding.

This sequence belongs to the vitamin-B12 independent methionine synthase family. It depends on Zn(2+) as a cofactor.

It catalyses the reaction 5-methyltetrahydropteroyltri-L-glutamate + L-homocysteine = tetrahydropteroyltri-L-glutamate + L-methionine. The protein operates within amino-acid biosynthesis; L-methionine biosynthesis via de novo pathway; L-methionine from L-homocysteine (MetE route): step 1/1. Functionally, catalyzes the transfer of a methyl group from 5-methyltetrahydrofolate to homocysteine resulting in methionine formation. This chain is 5-methyltetrahydropteroyltriglutamate--homocysteine methyltransferase, found in Escherichia coli (strain SMS-3-5 / SECEC).